Reading from the N-terminus, the 270-residue chain is ATP synthase subunit a (270 aa).

The next 7 membrane-spanning stretches (helical) occupy residues 29 to 49, 87 to 107, 108 to 128, 140 to 160, 182 to 202, 220 to 240, and 241 to 261; these read VDTF…FAMV, IAPL…MDLF, PVDL…GLEP, DVNA…GFSI, PVGA…ELAA, LIFI…GAPW, and AIFH…LTIV.

Belongs to the ATPase A chain family. As to quaternary structure, F-type ATPases have 2 components, CF(1) - the catalytic core - and CF(0) - the membrane proton channel. CF(1) has five subunits: alpha(3), beta(3), gamma(1), delta(1), epsilon(1). CF(0) has three main subunits: a(1), b(2) and c(9-12). The alpha and beta chains form an alternating ring which encloses part of the gamma chain. CF(1) is attached to CF(0) by a central stalk formed by the gamma and epsilon chains, while a peripheral stalk is formed by the delta and b chains.

The protein resides in the cell inner membrane. In terms of biological role, key component of the proton channel; it plays a direct role in the translocation of protons across the membrane. In Chromobacterium violaceum (strain ATCC 12472 / DSM 30191 / JCM 1249 / CCUG 213 / NBRC 12614 / NCIMB 9131 / NCTC 9757 / MK), this protein is ATP synthase subunit a.